We begin with the raw amino-acid sequence, 375 residues long: Major DNA-binding protein (375 aa).

Belongs to the herpesviridae DNA-binding protein family.

It is found in the host nucleus. Single-stranded DNA-binding protein required for DNA replication. The protein is Major DNA-binding protein of Equine herpesvirus 1 (strain HVS25A) (EHV-1).